A 215-amino-acid chain; its full sequence is Mediator of RNA polymerase II transcription subunit 20 (215 aa).

Belongs to the Mediator complex subunit 20 family. In terms of assembly, component of the Mediator complex.

Its subcellular location is the nucleus. Functionally, component of the Mediator complex, a coactivator involved in the regulated transcription of nearly all RNA polymerase II-dependent genes. Mediator functions as a bridge to convey information from gene-specific regulatory proteins to the basal RNA polymerase II transcription machinery. Mediator is recruited to promoters by direct interactions with regulatory proteins and serves as a scaffold for the assembly of a functional preinitiation complex with RNA polymerase II and the general transcription factors. The chain is Mediator of RNA polymerase II transcription subunit 20 (SRB2) from Candida glabrata (strain ATCC 2001 / BCRC 20586 / JCM 3761 / NBRC 0622 / NRRL Y-65 / CBS 138) (Yeast).